The chain runs to 402 residues: Imidazolonepropionase (402 aa).

The Fe(3+) site is built by histidine 66 and histidine 68. Zn(2+)-binding residues include histidine 66 and histidine 68. Residues arginine 75, tyrosine 138, and histidine 171 each coordinate 4-imidazolone-5-propanoate. Residue tyrosine 138 coordinates N-formimidoyl-L-glutamate. Histidine 236 contributes to the Fe(3+) binding site. Position 236 (histidine 236) interacts with Zn(2+). Glutamine 239 is a binding site for 4-imidazolone-5-propanoate. Aspartate 311 contacts Fe(3+). Position 311 (aspartate 311) interacts with Zn(2+). N-formimidoyl-L-glutamate contacts are provided by asparagine 313 and glycine 315. Threonine 316 is a 4-imidazolone-5-propanoate binding site.

The protein belongs to the metallo-dependent hydrolases superfamily. HutI family. Zn(2+) is required as a cofactor. Fe(3+) serves as cofactor.

It localises to the cytoplasm. The enzyme catalyses 4-imidazolone-5-propanoate + H2O = N-formimidoyl-L-glutamate. The protein operates within amino-acid degradation; L-histidine degradation into L-glutamate; N-formimidoyl-L-glutamate from L-histidine: step 3/3. Its function is as follows. Catalyzes the hydrolytic cleavage of the carbon-nitrogen bond in imidazolone-5-propanoate to yield N-formimidoyl-L-glutamate. It is the third step in the universal histidine degradation pathway. This chain is Imidazolonepropionase, found in Pseudomonas aeruginosa (strain UCBPP-PA14).